The sequence spans 99 residues: Ubiquitin-related modifier 1 homolog 2 (99 aa).

Glycine 99 carries the post-translational modification 1-thioglycine. Residue glycine 99 forms a Glycyl lysine isopeptide (Gly-Lys) (interchain with K-? in acceptor proteins) linkage.

Belongs to the URM1 family. C-terminal thiocarboxylation occurs in 2 steps, it is first acyl-adenylated (-COAMP) via the hesA/moeB/thiF part of the MOCS3 homolog, then thiocarboxylated (-COSH) via the rhodanese domain of the MOCS3 homolog.

It is found in the cytoplasm. It participates in tRNA modification; 5-methoxycarbonylmethyl-2-thiouridine-tRNA biosynthesis. Its function is as follows. Acts as a sulfur carrier required for 2-thiolation of mcm(5)S(2)U at tRNA wobble positions of cytosolic tRNA(Lys), tRNA(Glu) and tRNA(Gln). Serves as sulfur donor in tRNA 2-thiolation reaction by being thiocarboxylated (-COSH) at its C-terminus by MOCS3. The sulfur is then transferred to tRNA to form 2-thiolation of mcm(5)S(2)U. Also acts as a ubiquitin-like protein (UBL) that is covalently conjugated via an isopeptide bond to lysine residues of target proteins. The thiocarboxylated form serves as substrate for conjugation and oxidative stress specifically induces the formation of UBL-protein conjugates. The chain is Ubiquitin-related modifier 1 homolog 2 from Arabidopsis thaliana (Mouse-ear cress).